A 152-amino-acid polypeptide reads, in one-letter code: Aminoglycoside N(6')-acetyltransferase type 1 (152 aa).

One can recognise an N-acetyltransferase domain in the interval 5–152 (PLVRPVETTD…AQVRCFRKPL (148 aa)). Substrate contacts are provided by Trp-26, Tyr-73, Glu-86, and Asp-122. Asn-127 is an acetyl-CoA binding site.

As to quaternary structure, homodimer.

The enzyme catalyses kanamycin B + acetyl-CoA = N(6')-acetylkanamycin B + CoA + H(+). Its function is as follows. Catalyzes the transfer of an acetyl group from acetyl-CoA to the 6'-amino group of aminoglycoside molecules conferring resistance to antibiotics containing the purpurosamine ring including amikacin. The chain is Aminoglycoside N(6')-acetyltransferase type 1 (aacA7) from Klebsiella aerogenes (Enterobacter aerogenes).